A 196-amino-acid polypeptide reads, in one-letter code: Prefoldin subunit 3 (196 aa).

An N-acetylalanine modification is found at A2. At K58 the chain carries N6-acetyllysine.

Belongs to the prefoldin subunit alpha family. As to quaternary structure, heterohexamer of two PFD-alpha type and four PFD-beta type subunits. Binds to the C-terminal part of VHL.

It localises to the cytoplasm. The protein localises to the nucleus. Its function is as follows. Binds specifically to cytosolic chaperonin (c-CPN) and transfers target proteins to it. Binds to nascent polypeptide chain and promotes folding in an environment in which there are many competing pathways for nonnative proteins. This is Prefoldin subunit 3 (Vbp1) from Mus musculus (Mouse).